A 117-amino-acid chain; its full sequence is uncharacterized protein (117 aa).

This is an uncharacterized protein from Sinorhizobium fredii (strain NBRC 101917 / NGR234).